We begin with the raw amino-acid sequence, 101 residues long: Apolipoprotein C-II (101 aa).

The signal sequence occupies residues 1 to 22 (MGTRYLLVLLLVLLVLGFEVQG). The tract at residues 66–74 (TMDEKIRDI) is lipid binding. The lipoprotein lipase cofactor stretch occupies residues 78 to 101 (STAAVSTYAGIFTDQLLSMLKGDS).

Belongs to the apolipoprotein C2 family. In terms of processing, proapolipoprotein C-II is synthesized as a sialic acid containing glycoprotein which is subsequently desialylated prior to its proteolytic processing. Proapolipoprotein C-II, the major form found in plasma undergoes proteolytic cleavage of its N-terminal hexapeptide to generate apolipoprotein C-II, which occurs as the minor form in plasma. As to expression, highly expressed in the liver. Moderately expressed in the ileum, jejunum and ovary.

The protein localises to the secreted. Component of chylomicrons, very low-density lipoproteins (VLDL), low-density lipoproteins (LDL), and high-density lipoproteins (HDL) in plasma. Plays an important role in lipoprotein metabolism as an activator of lipoprotein lipase. Both proapolipoprotein C-II and apolipoprotein C-II can activate lipoprotein lipase. This is Apolipoprotein C-II (APOC2) from Canis lupus familiaris (Dog).